Reading from the N-terminus, the 424-residue chain is Vasopressin V1a receptor (424 aa).

Residues 1–40 (MSFPRGSQDRSVGNSSPWWPLTTEGSNGSQEAARLGEGDS) form a disordered region. Over 1–52 (MSFPRGSQDRSVGNSSPWWPLTTEGSNGSQEAARLGEGDSPLGDVRNEELAK) the chain is Extracellular. Residues 9–30 (DRSVGNSSPWWPLTTEGSNGSQ) show a composition bias toward polar residues. Asn27 carries an N-linked (GlcNAc...) asparagine glycan. Residues 53–76 (LEIAVLAVIFVVAVLGNSSVLLAL) traverse the membrane as a helical segment. At 77–88 (HRTPRKTSRMHL) the chain is on the cytoplasmic side. A helical transmembrane segment spans residues 89–110 (FIRHLSLADLAVAFFQVLPQLC). At 111–125 (WDITYRFRGPDWLCR) the chain is on the extracellular side. A disulfide bridge connects residues Cys124 and Cys205. Residues 126 to 147 (VVKHLQVFAMFASAYMLVVMTA) form a helical membrane-spanning segment. Topologically, residues 148 to 168 (DRYIAVCHPLKTLQQPARRSR) are cytoplasmic. Residues 169-190 (LMIATSWVLSFILSTPQYFIFS) traverse the membrane as a helical segment. Topologically, residues 191–220 (VIEIEVNNGTKTQDCWATFIQPWGTRAYVT) are extracellular. Residues 221-241 (WMTSGVFVAPVVVLGTCYGFI) form a helical membrane-spanning segment. Over 242–299 (CYHIWRNIRGKTASSRHSKGDKGSGEAVGPFHKGLLVTPCVSSVKSISRAKIRTVKMT) the chain is Cytoplasmic. The chain crosses the membrane as a helical span at residues 300–319 (FVIVSAYILCWAPFFIVQMW). At 320 to 337 (SVWDENFIWTDSENPSIT) the chain is on the extracellular side. A helical transmembrane segment spans residues 338–357 (ITALLASLNSCCNPWIYMFF). The Cytoplasmic segment spans residues 358-424 (SGHLLQDCVQ…KSIRFIPVST (67 aa)). 2 S-palmitoyl cysteine lipidation sites follow: Cys371 and Cys372. A disordered region spans residues 383–416 (DSDSMSRRQTSYSNNRSPTNSTGMWKDSPKSSKS). Polar residues predominate over residues 389 to 405 (RRQTSYSNNRSPTNSTG). Position 410 is a phosphoserine (Ser410).

It belongs to the G-protein coupled receptor 1 family. Vasopressin/oxytocin receptor subfamily. In terms of processing, palmitoylated on three cysteine residues, of which only two are identified. Localized within gonadotropes of the anterior pituitary of the brain. Broadly distributed throughout the cerebral cortex.

The protein resides in the cell membrane. It localises to the cytoplasmic vesicle membrane. Receptor for arginine vasopressin. The activity of this receptor is mediated by G proteins which activate a phosphatidyl-inositol-calcium second messenger system. Involved in social memory formation. The protein is Vasopressin V1a receptor (Avpr1a) of Rattus norvegicus (Rat).